The following is a 126-amino-acid chain: UPF0102 protein BH12350 (126 aa).

This sequence belongs to the UPF0102 family.

In Bartonella henselae (strain ATCC 49882 / DSM 28221 / CCUG 30454 / Houston 1) (Rochalimaea henselae), this protein is UPF0102 protein BH12350.